A 224-amino-acid polypeptide reads, in one-letter code: Cytidylate kinase (224 aa).

Residue 11–19 (GPAAAGKST) coordinates ATP.

It belongs to the cytidylate kinase family. Type 1 subfamily.

The protein localises to the cytoplasm. The catalysed reaction is CMP + ATP = CDP + ADP. It catalyses the reaction dCMP + ATP = dCDP + ADP. The sequence is that of Cytidylate kinase from Listeria monocytogenes serotype 4b (strain CLIP80459).